Reading from the N-terminus, the 64-residue chain is Putative antitoxin MJ0975 (64 aa).

Belongs to the UPF0165 family.

In terms of biological role, possibly the antitoxin component of a type II toxin-antitoxin (TA) system. Its cognate toxin is VapC2 (Potential). In Methanocaldococcus jannaschii (strain ATCC 43067 / DSM 2661 / JAL-1 / JCM 10045 / NBRC 100440) (Methanococcus jannaschii), this protein is Putative antitoxin MJ0975 (vapB2).